Here is a 175-residue protein sequence, read N- to C-terminus: Large ribosomal subunit protein uL10 (175 aa).

This sequence belongs to the universal ribosomal protein uL10 family. In terms of assembly, part of the ribosomal stalk of the 50S ribosomal subunit. The N-terminus interacts with L11 and the large rRNA to form the base of the stalk. The C-terminus forms an elongated spine to which L12 dimers bind in a sequential fashion forming a multimeric L10(L12)X complex.

In terms of biological role, forms part of the ribosomal stalk, playing a central role in the interaction of the ribosome with GTP-bound translation factors. The chain is Large ribosomal subunit protein uL10 from Synechococcus elongatus (strain ATCC 33912 / PCC 7942 / FACHB-805) (Anacystis nidulans R2).